Consider the following 29-residue polypeptide: Dermaseptin-1.2TR (29 aa).

A Valine amide modification is found at valine 29.

As to expression, expressed by the skin glands.

The protein localises to the secreted. In terms of biological role, has antimicrobial activity. The polypeptide is Dermaseptin-1.2TR (Phyllomedusa trinitatis (Trinidad leaf frog)).